Reading from the N-terminus, the 308-residue chain is Isoflavone reductase-like protein (308 aa).

NADP(+) is bound by residues 11–17 (GGTGYIG), R36, and K45. The active-site Proton acceptor is the K133. R137 serves as a coordination point for NADP(+).

It belongs to the NmrA-type oxidoreductase family. Isoflavone reductase subfamily. In terms of assembly, homodimer.

The protein localises to the cytoplasm. The chain is Isoflavone reductase-like protein from Olea europaea (Common olive).